A 138-amino-acid polypeptide reads, in one-letter code: Putative pre-16S rRNA nuclease (138 aa).

It belongs to the YqgF nuclease family.

It localises to the cytoplasm. Its function is as follows. Could be a nuclease involved in processing of the 5'-end of pre-16S rRNA. The chain is Putative pre-16S rRNA nuclease from Haemophilus ducreyi (strain 35000HP / ATCC 700724).